Here is a 251-residue protein sequence, read N- to C-terminus: NADPH-dependent oxidoreductase (251 aa).

Belongs to the flavin oxidoreductase frp family. FMN serves as cofactor.

Its function is as follows. Reduces FMN, organic nitro compounds and disulfide DTNB. Involved in maintenance of the cellular redox state and the disulfide stress response. This chain is NADPH-dependent oxidoreductase (nfrA), found in Staphylococcus epidermidis (strain ATCC 35984 / DSM 28319 / BCRC 17069 / CCUG 31568 / BM 3577 / RP62A).